Here is a 127-residue protein sequence, read N- to C-terminus: Small ribosomal subunit protein uS11 (127 aa).

The protein belongs to the universal ribosomal protein uS11 family. Part of the 30S ribosomal subunit. Interacts with proteins S7 and S18. Binds to IF-3.

Its function is as follows. Located on the platform of the 30S subunit, it bridges several disparate RNA helices of the 16S rRNA. Forms part of the Shine-Dalgarno cleft in the 70S ribosome. The sequence is that of Small ribosomal subunit protein uS11 from Streptococcus agalactiae serotype Ia (strain ATCC 27591 / A909 / CDC SS700).